The chain runs to 154 residues: Probable prefoldin subunit 5 (154 aa).

Belongs to the prefoldin subunit alpha family. As to quaternary structure, heterohexamer of two PFD-alpha type and four PFD-beta type subunits.

In terms of biological role, binds specifically to cytosolic chaperonin (c-CPN) and transfers target proteins to it. Binds to nascent polypeptide chain and promotes folding in an environment in which there are many competing pathways for nonnative proteins. The polypeptide is Probable prefoldin subunit 5 (Caenorhabditis briggsae).